The chain runs to 224 residues: Ribose-5-phosphate isomerase A (224 aa).

Residues 32 to 35 (TGST), 85 to 88 (DGAD), and 98 to 101 (KGGG) contribute to the substrate site. Glutamate 107 serves as the catalytic Proton acceptor. Lysine 125 contributes to the substrate binding site.

It belongs to the ribose 5-phosphate isomerase family. Homodimer.

The catalysed reaction is aldehydo-D-ribose 5-phosphate = D-ribulose 5-phosphate. It participates in carbohydrate degradation; pentose phosphate pathway; D-ribose 5-phosphate from D-ribulose 5-phosphate (non-oxidative stage): step 1/1. In terms of biological role, catalyzes the reversible conversion of ribose-5-phosphate to ribulose 5-phosphate. The protein is Ribose-5-phosphate isomerase A of Pseudomonas putida (strain W619).